A 217-amino-acid polypeptide reads, in one-letter code: Adenylate kinase (217 aa).

Residue 10 to 15 (GAGKGT) participates in ATP binding. The tract at residues 30 to 59 (STGDIFRAAMKNETPMGIEAKKYIDKGELV) is NMP. AMP-binding positions include threonine 31, arginine 36, 57 to 59 (ELV), 85 to 88 (GFPR), and glutamine 92. Residues 126-164 (GRFICRNCGATYHKLYNAPKVEGTCDVCGHHEFYQRDDD) are LID. Arginine 127 serves as a coordination point for ATP. Zn(2+)-binding residues include cysteine 130 and cysteine 133. 136–137 (TY) contributes to the ATP binding site. Residues cysteine 150 and cysteine 153 each contribute to the Zn(2+) site. AMP contacts are provided by arginine 161 and arginine 172. Glutamine 200 provides a ligand contact to ATP.

The protein belongs to the adenylate kinase family. As to quaternary structure, monomer.

The protein resides in the cytoplasm. The catalysed reaction is AMP + ATP = 2 ADP. The protein operates within purine metabolism; AMP biosynthesis via salvage pathway; AMP from ADP: step 1/1. Functionally, catalyzes the reversible transfer of the terminal phosphate group between ATP and AMP. Plays an important role in cellular energy homeostasis and in adenine nucleotide metabolism. The polypeptide is Adenylate kinase (Limosilactobacillus reuteri subsp. reuteri (strain JCM 1112) (Lactobacillus reuteri)).